The primary structure comprises 51 residues: Ribosomal protein eL39-like 2 (51 aa).

It belongs to the eukaryotic ribosomal protein eL39 family. Component of a male germ cell-specific 60S large ribosomal subunit (LSU), which contains RPL10L and RPL39L, instead of RPL10 and RPL39 paralogs. The composition of the rest of the complex is similar to classical ribosomes. Testis specific.

The protein localises to the cytoplasm. Functionally, male germ cell-specific component of the ribosome, which is required for the formation of sperm and male fertility. Replaces the RPL39 paralog in the ribosome of male germ cells. The ribosome is a large ribonucleoprotein complex responsible for the synthesis of proteins in the cell. The male germ cell-specific ribosome displays a ribosomal polypeptide exit tunnel of distinct size and charge states compared with the classical ribosome. It is responsible for regulating the biosynthesis and folding of a subset of male germ-cell-specific proteins that are essential for the formation of sperm. This is Ribosomal protein eL39-like 2 from Homo sapiens (Human).